The primary structure comprises 575 residues: Sulfite reductase [NADPH] hemoprotein beta-component (575 aa).

4 residues coordinate [4Fe-4S] cluster: C440, C446, C485, and C489. A siroheme-binding site is contributed by C489.

This sequence belongs to the nitrite and sulfite reductase 4Fe-4S domain family. Alpha(8)-beta(8). The alpha component is a flavoprotein, the beta component is a hemoprotein. It depends on siroheme as a cofactor. Requires [4Fe-4S] cluster as cofactor.

The enzyme catalyses hydrogen sulfide + 3 NADP(+) + 3 H2O = sulfite + 3 NADPH + 4 H(+). It functions in the pathway sulfur metabolism; hydrogen sulfide biosynthesis; hydrogen sulfide from sulfite (NADPH route): step 1/1. In terms of biological role, component of the sulfite reductase complex that catalyzes the 6-electron reduction of sulfite to sulfide. This is one of several activities required for the biosynthesis of L-cysteine from sulfate. This Chromohalobacter salexigens (strain ATCC BAA-138 / DSM 3043 / CIP 106854 / NCIMB 13768 / 1H11) protein is Sulfite reductase [NADPH] hemoprotein beta-component.